The chain runs to 318 residues: tRNA U34 carboxymethyltransferase (318 aa).

Carboxy-S-adenosyl-L-methionine is bound by residues lysine 88, tryptophan 102, lysine 107, glycine 126, 176-177 (LE), methionine 192, tyrosine 196, and arginine 311.

The protein belongs to the class I-like SAM-binding methyltransferase superfamily. CmoB family. Homotetramer.

It carries out the reaction carboxy-S-adenosyl-L-methionine + 5-hydroxyuridine(34) in tRNA = 5-carboxymethoxyuridine(34) in tRNA + S-adenosyl-L-homocysteine + H(+). In terms of biological role, catalyzes carboxymethyl transfer from carboxy-S-adenosyl-L-methionine (Cx-SAM) to 5-hydroxyuridine (ho5U) to form 5-carboxymethoxyuridine (cmo5U) at position 34 in tRNAs. The sequence is that of tRNA U34 carboxymethyltransferase from Pseudomonas putida (strain W619).